A 387-amino-acid chain; its full sequence is Carboxyaminopropylagmatine decarboxylase (387 aa).

Residue Lys52 is modified to N6-(pyridoxal phosphate)lysine.

Belongs to the Orn/Lys/Arg decarboxylase class-II family. Pyridoxal 5'-phosphate serves as cofactor.

It carries out the reaction N(1)-[(S)-3-amino-3-carboxypropyl]agmatine + H(+) = N(1)-(3-aminopropyl)agmatine + CO2. The protein operates within amine and polyamine biosynthesis; spermidine biosynthesis. Its function is as follows. Decarboxylase involved in the biosynthesis of spermidine via the carboxyaminopropylagmatine (CAPA) pathway. Catalyzes the decarboxylation of CAPA to form aminopropylagmatine (APA). Can also decarboxylate carboxyspermidine and carboxynorspermidine, but not ornithine, arginine, lysine and meso-diaminopimelate. This is Carboxyaminopropylagmatine decarboxylase from Synechocystis sp. (strain ATCC 27184 / PCC 6803 / Kazusa).